A 527-amino-acid polypeptide reads, in one-letter code: Bacillolysin (527 aa).

The N-terminal stretch at 1–28 (MKKSYLATSLTLSIAVGVSGFTSVPAFA) is a signal peptide. A propeptide spans 29–223 (KTKIDYHKQW…VINKYNMLDH (195 aa)) (activation peptide). Aspartate 276, aspartate 278, and aspartate 354 together coordinate Ca(2+). Histidine 358 is a binding site for Zn(2+). Glutamate 359 is an active-site residue. Zn(2+) is bound by residues histidine 362 and glutamate 382. Residues aspartate 393, asparagine 394, aspartate 396, glutamate 401, tyrosine 404, threonine 405, and aspartate 411 each coordinate Ca(2+). Histidine 442 serves as the catalytic Proton donor.

The protein belongs to the peptidase M4 family. It depends on Ca(2+) as a cofactor. Zn(2+) serves as cofactor.

It localises to the secreted. It carries out the reaction Similar, but not identical, to that of thermolysin.. Extracellular zinc metalloprotease. This chain is Bacillolysin (npr), found in Brevibacillus brevis (Bacillus brevis).